Reading from the N-terminus, the 576-residue chain is Arginine--tRNA ligase (576 aa).

Positions Pro121–His131 match the 'HIGH' region motif.

The protein belongs to the class-I aminoacyl-tRNA synthetase family. Monomer.

It localises to the cytoplasm. The enzyme catalyses tRNA(Arg) + L-arginine + ATP = L-arginyl-tRNA(Arg) + AMP + diphosphate. This Alteromonas mediterranea (strain DSM 17117 / CIP 110805 / LMG 28347 / Deep ecotype) protein is Arginine--tRNA ligase.